A 238-amino-acid polypeptide reads, in one-letter code: 1-(5-phosphoribosyl)-5-[(5-phosphoribosylamino)methylideneamino] imidazole-4-carboxamide isomerase (238 aa).

Aspartate 8 functions as the Proton acceptor in the catalytic mechanism. The active-site Proton donor is the aspartate 129.

It belongs to the HisA/HisF family.

The protein localises to the cytoplasm. It catalyses the reaction 1-(5-phospho-beta-D-ribosyl)-5-[(5-phospho-beta-D-ribosylamino)methylideneamino]imidazole-4-carboxamide = 5-[(5-phospho-1-deoxy-D-ribulos-1-ylimino)methylamino]-1-(5-phospho-beta-D-ribosyl)imidazole-4-carboxamide. It participates in amino-acid biosynthesis; L-histidine biosynthesis; L-histidine from 5-phospho-alpha-D-ribose 1-diphosphate: step 4/9. The polypeptide is 1-(5-phosphoribosyl)-5-[(5-phosphoribosylamino)methylideneamino] imidazole-4-carboxamide isomerase (Clostridium kluyveri (strain NBRC 12016)).